The primary structure comprises 689 residues: Armadillo-like helical domain-containing protein 3 (689 aa).

Residues Ile-520–Gly-538 traverse the membrane as a helical segment.

It belongs to the ARMH3 family. In terms of assembly, interacts with PI4KB. Interacts with GBF1.

The protein localises to the golgi apparatus membrane. It is found in the cytoplasm. In terms of biological role, involved in GBF1 recruitment, Golgi maintenance and protein secretion. This chain is Armadillo-like helical domain-containing protein 3, found in Homo sapiens (Human).